A 339-amino-acid polypeptide reads, in one-letter code: Lipoate-protein ligase A (339 aa).

In terms of domain architecture, BPL/LPL catalytic spans 29 to 216 (DPSQQVLFLW…SFENFYAGKA (188 aa)). ATP-binding positions include Arg71, 76–79 (GAVF), and Lys134. Lys134 lines the (R)-lipoate pocket.

The protein belongs to the LplA family. Monomer.

It localises to the cytoplasm. It carries out the reaction L-lysyl-[lipoyl-carrier protein] + (R)-lipoate + ATP = N(6)-[(R)-lipoyl]-L-lysyl-[lipoyl-carrier protein] + AMP + diphosphate + H(+). The protein operates within protein modification; protein lipoylation via exogenous pathway; protein N(6)-(lipoyl)lysine from lipoate: step 1/2. It participates in protein modification; protein lipoylation via exogenous pathway; protein N(6)-(lipoyl)lysine from lipoate: step 2/2. Functionally, catalyzes both the ATP-dependent activation of exogenously supplied lipoate to lipoyl-AMP and the transfer of the activated lipoyl onto the lipoyl domains of lipoate-dependent enzymes. The protein is Lipoate-protein ligase A of Bdellovibrio bacteriovorus (strain ATCC 15356 / DSM 50701 / NCIMB 9529 / HD100).